The sequence spans 277 residues: Putative protease slr0021 (277 aa).

Serine 85 functions as the Nucleophile in the catalytic mechanism. The active-site Proton donor/acceptor is the lysine 137.

It belongs to the peptidase S49 family.

In Synechocystis sp. (strain ATCC 27184 / PCC 6803 / Kazusa), this protein is Putative protease slr0021.